The following is a 245-amino-acid chain: Ubiquinone/menaquinone biosynthesis C-methyltransferase UbiE (245 aa).

S-adenosyl-L-methionine contacts are provided by residues Thr-71, Asp-92, and 118 to 119 (DA).

Belongs to the class I-like SAM-binding methyltransferase superfamily. MenG/UbiE family.

It catalyses the reaction a 2-demethylmenaquinol + S-adenosyl-L-methionine = a menaquinol + S-adenosyl-L-homocysteine + H(+). The enzyme catalyses a 2-methoxy-6-(all-trans-polyprenyl)benzene-1,4-diol + S-adenosyl-L-methionine = a 5-methoxy-2-methyl-3-(all-trans-polyprenyl)benzene-1,4-diol + S-adenosyl-L-homocysteine + H(+). It functions in the pathway quinol/quinone metabolism; menaquinone biosynthesis; menaquinol from 1,4-dihydroxy-2-naphthoate: step 2/2. The protein operates within cofactor biosynthesis; ubiquinone biosynthesis. Methyltransferase required for the conversion of demethylmenaquinol (DMKH2) to menaquinol (MKH2) and the conversion of 2-polyprenyl-6-methoxy-1,4-benzoquinol (DDMQH2) to 2-polyprenyl-3-methyl-6-methoxy-1,4-benzoquinol (DMQH2). This is Ubiquinone/menaquinone biosynthesis C-methyltransferase UbiE from Neisseria meningitidis serogroup A / serotype 4A (strain DSM 15465 / Z2491).